A 173-amino-acid chain; its full sequence is Protein GrpE (173 aa).

Belongs to the GrpE family. Homodimer.

The protein localises to the cytoplasm. In terms of biological role, participates actively in the response to hyperosmotic and heat shock by preventing the aggregation of stress-denatured proteins, in association with DnaK and GrpE. It is the nucleotide exchange factor for DnaK and may function as a thermosensor. Unfolded proteins bind initially to DnaJ; upon interaction with the DnaJ-bound protein, DnaK hydrolyzes its bound ATP, resulting in the formation of a stable complex. GrpE releases ADP from DnaK; ATP binding to DnaK triggers the release of the substrate protein, thus completing the reaction cycle. Several rounds of ATP-dependent interactions between DnaJ, DnaK and GrpE are required for fully efficient folding. This is Protein GrpE from Campylobacter fetus subsp. fetus (strain 82-40).